The following is a 482-amino-acid chain: Probable F-box protein At1g30780 (482 aa).

One can recognise an F-box domain in the interval 230–280; sequence EIDLDSLPFDLKMVILTRLSAKSLTNFKRVSKMWSSIIGSQRFIDSFFTMS.

This Arabidopsis thaliana (Mouse-ear cress) protein is Probable F-box protein At1g30780.